Reading from the N-terminus, the 1888-residue chain is Fatty acid synthase subunit alpha (1888 aa).

The disordered stretch occupies residues 98-118 (DLAPVEEPNAEEQTGAAATPA). The 76-residue stretch at 146-221 (VKASLLLHVL…ETFQDTFAGS (76 aa)) folds into the Carrier domain. Ser-181 carries the post-translational modification O-(pantetheine 4'-phosphoryl)serine. The segment at 675-874 (DKYVLITGAG…CGAIIGWTRG (200 aa)) is beta-ketoacyl reductase. The region spanning 1119 to 1657 (KQMIQEVVIE…QKGAQAVAVH (539 aa)) is the Ketosynthase family 3 (KS3) domain. Active-site for beta-ketoacyl synthase activity residues include Cys-1305, His-1542, and His-1583. Mg(2+) contacts are provided by Asp-1774, Val-1775, and Glu-1776. Residues 1774-1776 (DVE), Tyr-1800, Ser-1810, 1819-1829 (EAVFKSLGVKS), 1843-1846 (REAG), and 1873-1875 (ISH) contribute to the acetyl-CoA site. Ser-1874 and His-1875 together coordinate Mg(2+).

This sequence belongs to the thiolase-like superfamily. Fungal fatty acid synthetase subunit alpha family. As to quaternary structure, fatty acid synthase is composed of alpha and beta subunits.

It carries out the reaction acetyl-CoA + n malonyl-CoA + 2n NADPH + 4n H(+) = a long-chain-acyl-CoA + n CoA + n CO2 + 2n NADP(+).. The enzyme catalyses a fatty acyl-[ACP] + malonyl-[ACP] + H(+) = a 3-oxoacyl-[ACP] + holo-[ACP] + CO2. The catalysed reaction is a (3R)-hydroxyacyl-[ACP] + NADP(+) = a 3-oxoacyl-[ACP] + NADPH + H(+). Functionally, fatty acid synthetase catalyzes the formation of long-chain fatty acids from acetyl-CoA, malonyl-CoA and NADPH. The alpha subunit contains domains for: acyl carrier protein, 3-oxoacyl-[acyl-carrier-protein] reductase, and 3-oxoacyl-[acyl-carrier-protein] synthase. In this species, higher amounts of C18 than C16 fatty acids are produced. In Lachancea kluyveri (Yeast), this protein is Fatty acid synthase subunit alpha (FAS2).